Consider the following 423-residue polypeptide: Serine hydroxymethyltransferase (423 aa).

(6S)-5,6,7,8-tetrahydrofolate is bound by residues Leu125 and 129 to 131; that span reads GHL. Lys234 carries the N6-(pyridoxal phosphate)lysine modification. Glu249 serves as a coordination point for (6S)-5,6,7,8-tetrahydrofolate.

Belongs to the SHMT family. As to quaternary structure, homodimer. Pyridoxal 5'-phosphate serves as cofactor.

It localises to the cytoplasm. The catalysed reaction is (6R)-5,10-methylene-5,6,7,8-tetrahydrofolate + glycine + H2O = (6S)-5,6,7,8-tetrahydrofolate + L-serine. Its pathway is one-carbon metabolism; tetrahydrofolate interconversion. The protein operates within amino-acid biosynthesis; glycine biosynthesis; glycine from L-serine: step 1/1. Catalyzes the reversible interconversion of serine and glycine with tetrahydrofolate (THF) serving as the one-carbon carrier. This reaction serves as the major source of one-carbon groups required for the biosynthesis of purines, thymidylate, methionine, and other important biomolecules. Also exhibits THF-independent aldolase activity toward beta-hydroxyamino acids, producing glycine and aldehydes, via a retro-aldol mechanism. This is Serine hydroxymethyltransferase from Thermobifida fusca (strain YX).